We begin with the raw amino-acid sequence, 132 residues long: Small ribosomal subunit protein uS8 (132 aa).

The protein belongs to the universal ribosomal protein uS8 family. Part of the 30S ribosomal subunit. Contacts proteins S5 and S12.

Its function is as follows. One of the primary rRNA binding proteins, it binds directly to 16S rRNA central domain where it helps coordinate assembly of the platform of the 30S subunit. In Renibacterium salmoninarum (strain ATCC 33209 / DSM 20767 / JCM 11484 / NBRC 15589 / NCIMB 2235), this protein is Small ribosomal subunit protein uS8.